A 1052-amino-acid polypeptide reads, in one-letter code: Isoleucine--tRNA ligase (1052 aa).

A 'HIGH' region motif is present at residues 58-68; that stretch reads PFANGLPHYGH. The 'KMSKS' region motif lies at 627–631; that stretch reads KMSKS. Lys-630 is an ATP binding site.

This sequence belongs to the class-I aminoacyl-tRNA synthetase family. IleS type 2 subfamily. As to quaternary structure, monomer. The cofactor is Zn(2+).

The protein localises to the cytoplasm. It carries out the reaction tRNA(Ile) + L-isoleucine + ATP = L-isoleucyl-tRNA(Ile) + AMP + diphosphate. Its function is as follows. Catalyzes the attachment of isoleucine to tRNA(Ile). As IleRS can inadvertently accommodate and process structurally similar amino acids such as valine, to avoid such errors it has two additional distinct tRNA(Ile)-dependent editing activities. One activity is designated as 'pretransfer' editing and involves the hydrolysis of activated Val-AMP. The other activity is designated 'posttransfer' editing and involves deacylation of mischarged Val-tRNA(Ile). The chain is Isoleucine--tRNA ligase from Corynebacterium diphtheriae (strain ATCC 700971 / NCTC 13129 / Biotype gravis).